We begin with the raw amino-acid sequence, 314 residues long: tRNA-cytidine(32) 2-sulfurtransferase (314 aa).

The PP-loop motif signature appears at 46–51; sequence SGGKDS. [4Fe-4S] cluster-binding residues include cysteine 121, cysteine 124, and cysteine 212.

The protein belongs to the TtcA family. Homodimer. The cofactor is Mg(2+). [4Fe-4S] cluster serves as cofactor.

The protein resides in the cytoplasm. It catalyses the reaction cytidine(32) in tRNA + S-sulfanyl-L-cysteinyl-[cysteine desulfurase] + AH2 + ATP = 2-thiocytidine(32) in tRNA + L-cysteinyl-[cysteine desulfurase] + A + AMP + diphosphate + H(+). It participates in tRNA modification. Catalyzes the ATP-dependent 2-thiolation of cytidine in position 32 of tRNA, to form 2-thiocytidine (s(2)C32). The sulfur atoms are provided by the cysteine/cysteine desulfurase (IscS) system. The protein is tRNA-cytidine(32) 2-sulfurtransferase of Nitrosomonas europaea (strain ATCC 19718 / CIP 103999 / KCTC 2705 / NBRC 14298).